The sequence spans 295 residues: Protoheme IX farnesyltransferase (295 aa).

9 helical membrane passes run 27–47 (LVVFTAIAGMVAAPGSIHPFL), 48–68 (ALISLMCIALGSGSAGAINMW), 94–114 (SALEFGITIGILSVFIMAIAV), 117–137 (ISAALLAVSILFYVFVYTIWL), 144–164 (NIVIGGAAGAFPPMIGWAVVT), 171–191 (SFILFLIIFMWTPPHFWALSL), 216–236 (KHILIYSILLVLTSLLPALFL), 241–261 (FYLSMAIIEGCVFIWFAISVI), and 272–292 (MFSYSISYLFSLFASIIFCSI).

Belongs to the UbiA prenyltransferase family. Protoheme IX farnesyltransferase subfamily.

The protein localises to the cell membrane. It carries out the reaction heme b + (2E,6E)-farnesyl diphosphate + H2O = Fe(II)-heme o + diphosphate. The protein operates within porphyrin-containing compound metabolism; heme O biosynthesis; heme O from protoheme: step 1/1. In terms of biological role, converts heme B (protoheme IX) to heme O by substitution of the vinyl group on carbon 2 of heme B porphyrin ring with a hydroxyethyl farnesyl side group. In Wolbachia pipientis subsp. Culex pipiens (strain wPip), this protein is Protoheme IX farnesyltransferase.